A 520-amino-acid polypeptide reads, in one-letter code: Cholesterol side-chain cleavage enzyme, mitochondrial (520 aa).

The N-terminal 36 residues, M1–N36, are a transit peptide targeting the mitochondrion. C458 provides a ligand contact to heme.

This sequence belongs to the cytochrome P450 family. In terms of assembly, interacts with FDX1/adrenodoxin. The cofactor is heme.

The protein localises to the mitochondrion inner membrane. It carries out the reaction 6 reduced [adrenodoxin] + cholesterol + 3 O2 + 6 H(+) = 4-methylpentanal + pregnenolone + 6 oxidized [adrenodoxin] + 4 H2O. It catalyses the reaction 2 reduced [adrenodoxin] + cholesterol + O2 + 2 H(+) = (22R)-hydroxycholesterol + 2 oxidized [adrenodoxin] + H2O. The enzyme catalyses (22R)-hydroxycholesterol + 2 reduced [adrenodoxin] + O2 + 2 H(+) = (20R,22R)-20,22-dihydroxycholesterol + 2 oxidized [adrenodoxin] + H2O. The catalysed reaction is (20R,22R)-20,22-dihydroxycholesterol + 2 reduced [adrenodoxin] + O2 + 2 H(+) = 4-methylpentanal + pregnenolone + 2 oxidized [adrenodoxin] + 2 H2O. Its pathway is lipid metabolism; C21-steroid hormone metabolism. The protein operates within steroid metabolism; cholesterol metabolism. Its function is as follows. A cytochrome P450 monooxygenase that catalyzes the side-chain hydroxylation and cleavage of cholesterol to pregnenolone, the precursor of most steroid hormones. Catalyzes three sequential oxidation reactions of cholesterol, namely the hydroxylation at C22 followed with the hydroxylation at C20 to yield 20R,22R-hydroxycholesterol that is further cleaved between C20 and C22 to yield the C21-steroid pregnenolone and 4-methylpentanal. Mechanistically, uses molecular oxygen inserting one oxygen atom into a substrate and reducing the second into a water molecule. Two electrons are provided by NADPH via a two-protein mitochondrial transfer system comprising flavoprotein FDXR (adrenodoxin/ferredoxin reductase) and nonheme iron-sulfur protein FDX1 or FDX2 (adrenodoxin/ferredoxin). This Mesocricetus auratus (Golden hamster) protein is Cholesterol side-chain cleavage enzyme, mitochondrial (CYP11A1).